The following is a 291-amino-acid chain: Formamidopyrimidine-DNA glycosylase (291 aa).

Pro2 functions as the Schiff-base intermediate with DNA in the catalytic mechanism. Glu3 acts as the Proton donor in catalysis. Lys60 serves as the catalytic Proton donor; for beta-elimination activity. His97, Arg116, and Arg161 together coordinate DNA. The FPG-type zinc-finger motif lies at 246 to 280 (WVYNRAGEPCRVCGMPIQRIRLAGRSSHFCSECQT). The active-site Proton donor; for delta-elimination activity is the Arg270.

The protein belongs to the FPG family. In terms of assembly, monomer. It depends on Zn(2+) as a cofactor.

It carries out the reaction Hydrolysis of DNA containing ring-opened 7-methylguanine residues, releasing 2,6-diamino-4-hydroxy-5-(N-methyl)formamidopyrimidine.. The enzyme catalyses 2'-deoxyribonucleotide-(2'-deoxyribose 5'-phosphate)-2'-deoxyribonucleotide-DNA = a 3'-end 2'-deoxyribonucleotide-(2,3-dehydro-2,3-deoxyribose 5'-phosphate)-DNA + a 5'-end 5'-phospho-2'-deoxyribonucleoside-DNA + H(+). Functionally, involved in base excision repair of DNA damaged by oxidation or by mutagenic agents. Acts as a DNA glycosylase that recognizes and removes damaged bases. Has a preference for oxidized purines, such as 7,8-dihydro-8-oxoguanine (8-oxoG). Has AP (apurinic/apyrimidinic) lyase activity and introduces nicks in the DNA strand. Cleaves the DNA backbone by beta-delta elimination to generate a single-strand break at the site of the removed base with both 3'- and 5'-phosphates. This is Formamidopyrimidine-DNA glycosylase from Nostoc punctiforme (strain ATCC 29133 / PCC 73102).